Reading from the N-terminus, the 121-residue chain is MNKTRISRVGEEIKKELSLVLQRGLKDPRVGFVTVTDVEVSSDLQLAKVFVSIFGSEEERKASLAGLTKAKGYLRTEIGKRVKLRHIPDFVFKLDESIDYGSKIESILREISTEGEKQDES.

The protein belongs to the RbfA family. As to quaternary structure, monomer. Binds 30S ribosomal subunits, but not 50S ribosomal subunits or 70S ribosomes.

It localises to the cytoplasm. Its function is as follows. One of several proteins that assist in the late maturation steps of the functional core of the 30S ribosomal subunit. Associates with free 30S ribosomal subunits (but not with 30S subunits that are part of 70S ribosomes or polysomes). Required for efficient processing of 16S rRNA. May interact with the 5'-terminal helix region of 16S rRNA. This is Ribosome-binding factor A from Brevibacillus brevis (strain 47 / JCM 6285 / NBRC 100599).